Consider the following 59-residue polypeptide: Ribosome biogenesis protein Nop10 (59 aa).

Belongs to the NOP10 family.

Involved in ribosome biogenesis; more specifically in 18S rRNA pseudouridylation and in cleavage of pre-rRNA. This Thermococcus sibiricus (strain DSM 12597 / MM 739) protein is Ribosome biogenesis protein Nop10.